A 351-amino-acid chain; its full sequence is Foldase protein PrsA 1 (351 aa).

An N-terminal signal peptide occupies residues 1–22 (MKNSNKLIASVVTLASVMALAA). Cysteine 23 carries the N-palmitoyl cysteine lipid modification. Cysteine 23 carries S-diacylglycerol cysteine lipidation. Residues 145–240 (TPTMAVEMIT…KKFYIVKVTK (96 aa)) enclose the PpiC domain. Low complexity-rich tracts occupy residues 303 to 317 (KTKAASESSTTSESS) and 326 to 351 (ESEQTQTSSAEEPTETEAQTQEPAAQ). The segment at 303-351 (KTKAASESSTTSESSKAAEENPSESEQTQTSSAEEPTETEAQTQEPAAQ) is disordered.

The protein belongs to the PrsA family.

Its subcellular location is the cell membrane. The catalysed reaction is [protein]-peptidylproline (omega=180) = [protein]-peptidylproline (omega=0). In terms of biological role, plays a major role in protein secretion by helping the post-translocational extracellular folding of several secreted proteins. This is Foldase protein PrsA 1 from Streptococcus pyogenes serotype M6 (strain ATCC BAA-946 / MGAS10394).